The chain runs to 362 residues: MERITVTLGERSYPITIAAGLFNEPASFLPLKSGDQVMLVTNETLAPLYLDKVRGVLERAGVNVDSVILPDGEQYKSLTVLDTVFTALLKKPHGRDTTLVALGGGVIGDLTGFAAASYQRGVRFIQVPTTLLSQVDSSVGGKTAVNHPLGKNMIGAFYQPASVVVDLDCLKTLPARELASGLAEVIKYGIILDADFFTWLEGNLDALLRLDGPAMAYCIRRCCELKAEVVAADEREAGLRALLNLGHTFGHAIEAEMGYGNWLHGEAVAAGIVMAARASERLGQFSSADTQRIIALLERAGLPVNGPCEMSAQDYLPHMLRDKKVLAGELRLVLPLAIGKSEVRGGVSHEVVLSAIADCQQA.

Residues 71 to 76, 105 to 109, 129 to 130, K142, K151, and 169 to 172 contribute to the NAD(+) site; these read DGEQYK, GVIGD, TT, and CLKT. Zn(2+) is bound by residues E184, H247, and H264.

Belongs to the sugar phosphate cyclases superfamily. Dehydroquinate synthase family. Co(2+) is required as a cofactor. The cofactor is Zn(2+). Requires NAD(+) as cofactor.

The protein resides in the cytoplasm. It carries out the reaction 7-phospho-2-dehydro-3-deoxy-D-arabino-heptonate = 3-dehydroquinate + phosphate. It functions in the pathway metabolic intermediate biosynthesis; chorismate biosynthesis; chorismate from D-erythrose 4-phosphate and phosphoenolpyruvate: step 2/7. Its function is as follows. Catalyzes the conversion of 3-deoxy-D-arabino-heptulosonate 7-phosphate (DAHP) to dehydroquinate (DHQ). This Salmonella agona (strain SL483) protein is 3-dehydroquinate synthase.